Reading from the N-terminus, the 104-residue chain is L-rhamnose mutarotase (104 aa).

Y18 serves as a coordination point for substrate. H22 functions as the Proton donor in the catalytic mechanism. Residues Y41 and 76-77 contribute to the substrate site; that span reads WW.

The protein belongs to the rhamnose mutarotase family. As to quaternary structure, homodimer.

The protein resides in the cytoplasm. The enzyme catalyses alpha-L-rhamnose = beta-L-rhamnose. It functions in the pathway carbohydrate metabolism; L-rhamnose metabolism. In terms of biological role, involved in the anomeric conversion of L-rhamnose. In Oceanobacillus iheyensis (strain DSM 14371 / CIP 107618 / JCM 11309 / KCTC 3954 / HTE831), this protein is L-rhamnose mutarotase.